The primary structure comprises 572 residues: Hemolysin-1 (572 aa).

In terms of biological role, bacterial hemolysins are exotoxins that attack blood cell membranes and cause cell rupture by mechanisms not clearly defined. The protein is Hemolysin-1 (ash1) of Aeromonas salmonicida.